Here is a 543-residue protein sequence, read N- to C-terminus: MARYIFITGGVVSSLGKGLASAALGALLQARGYKVRLRKLDPYLNLDPGTMSPYQHGEVFVTDDGAETDLDLGHYERFTGRPATRADNITTGRIYQDILTKERRGDYLGATIQVVPHVTNAIKEFIVDSNDAYDFVLVEIGGTVGDIEGLPFFEAIRQIKNDLPRGDVIYIHLTLLPYIPSAGELKTKPTQHSVKELRSIGIQPDILLCRTDRSIPKEERRKLGLFCNVRESAVIEARDADSIYAVPEAYHAAGLDEEVLAAFGIASKGEPGLDRWTVINERIRNPEGEVTIAIVGKYTGMKDAYKSLIEALSHGGIANKVKVNIDWIESEVFENEDPAPFLEHVNGILVPGGFGQRGAEGKIEAARFARERNVPYFGICFGMQMAVIEAARNLAGIADANSTEFGPTKEPLVGLMTEWLRGNQLEKRSNAGDLGGTMRLGAYPAALKRGSRVSQIYGDVLEISERHRHRYEVNTAYKDRLEQHGLRFSGLSPDGVLPEIVEYEGHPWFIGVQFHPELKSRPFEPHPLFASFIEAAMAQSRLV.

Positions 1–265 (MARYIFITGG…DEEVLAAFGI (265 aa)) are amidoligase domain. Ser13 is a CTP binding site. Ser13 serves as a coordination point for UTP. 14 to 19 (SLGKGL) contacts ATP. Tyr54 is an L-glutamine binding site. Asp71 serves as a coordination point for ATP. 2 residues coordinate Mg(2+): Asp71 and Glu139. CTP is bound by residues 146 to 148 (DIE), 186 to 191 (KTKPTQ), and Lys222. UTP-binding positions include 186 to 191 (KTKPTQ) and Lys222. 238–240 (RDA) contributes to the ATP binding site. Residues 291-542 (TIAIVGKYTG…IEAAMAQSRL (252 aa)) enclose the Glutamine amidotransferase type-1 domain. Gly353 serves as a coordination point for L-glutamine. Cys380 acts as the Nucleophile; for glutamine hydrolysis in catalysis. Residues 381 to 384 (FGMQ), Glu404, and Arg470 contribute to the L-glutamine site. Active-site residues include His515 and Glu517.

The protein belongs to the CTP synthase family. Homotetramer.

It carries out the reaction UTP + L-glutamine + ATP + H2O = CTP + L-glutamate + ADP + phosphate + 2 H(+). The enzyme catalyses L-glutamine + H2O = L-glutamate + NH4(+). The catalysed reaction is UTP + NH4(+) + ATP = CTP + ADP + phosphate + 2 H(+). It functions in the pathway pyrimidine metabolism; CTP biosynthesis via de novo pathway; CTP from UDP: step 2/2. With respect to regulation, allosterically activated by GTP, when glutamine is the substrate; GTP has no effect on the reaction when ammonia is the substrate. The allosteric effector GTP functions by stabilizing the protein conformation that binds the tetrahedral intermediate(s) formed during glutamine hydrolysis. Inhibited by the product CTP, via allosteric rather than competitive inhibition. In terms of biological role, catalyzes the ATP-dependent amination of UTP to CTP with either L-glutamine or ammonia as the source of nitrogen. Regulates intracellular CTP levels through interactions with the four ribonucleotide triphosphates. The sequence is that of CTP synthase from Rhodopseudomonas palustris (strain BisA53).